The sequence spans 625 residues: tRNA uridine 5-carboxymethylaminomethyl modification enzyme MnmG (625 aa).

FAD-binding positions include 13–18 (GGGHAG), V125, and S182. 276-290 (GPRYCPSIEDKITRF) serves as a coordination point for NAD(+). Q373 contributes to the FAD binding site.

This sequence belongs to the MnmG family. As to quaternary structure, homodimer. Heterotetramer of two MnmE and two MnmG subunits. FAD is required as a cofactor.

Its subcellular location is the cytoplasm. Functionally, NAD-binding protein involved in the addition of a carboxymethylaminomethyl (cmnm) group at the wobble position (U34) of certain tRNAs, forming tRNA-cmnm(5)s(2)U34. The sequence is that of tRNA uridine 5-carboxymethylaminomethyl modification enzyme MnmG from Lactococcus lactis subsp. cremoris (strain MG1363).